Here is a 1074-residue protein sequence, read N- to C-terminus: Formin-G (1074 aa).

In terms of domain architecture, GBD/FH3 spans 34 to 423 (LQMQQGSKTY…DKINEFEKKI (390 aa)). Disordered regions lie at residues 476-507 (QSIS…DIQS) and 549-639 (FTPT…NPSS). Residues 481-503 (SQDSSNNQKASSSSSNTSTLNDS) show a composition bias toward low complexity. Residues 502–530 (DSDIQSIQSSLKEATLEIERLKLAIEEKM) adopt a coiled-coil conformation. The span at 549–561 (FTPTSPDISNDGQ) shows a compositional bias: polar residues. The segment covering 568 to 610 (APPPSPSPPPPISGGGAPPPPPPPPPPPSGGGAPPPPPPPPPS) has biased composition (pro residues). In terms of domain architecture, FH1 spans 597–623 (GGGAPPPPPPPPPSGGKKAGAPGAPPT). In terms of domain architecture, FH2 spans 631 to 1031 (NKPVINPSSK…ASGDNGAVQN (401 aa)). A coiled-coil region spans residues 914–971 (DINDLEKQFNISKNNCKKVLEANIPSSSKFQSTIGSFLEKTEIDIKNLKENQKNIVDS). The DAD domain maps to 1037–1073 (GADPLAALANAIKLGQTGLRKRPGPENSSGGSQLNLN). The disordered stretch occupies residues 1053 to 1074 (TGLRKRPGPENSSGGSQLNLNK). Polar residues predominate over residues 1062-1074 (ENSSGGSQLNLNK).

It belongs to the formin homology family. Diaphanous subfamily. In terms of assembly, interacts (via GBD/FH3 domain) with activated Rho-GTPases.

Its function is as follows. Formins play an important role in the nucleation of actin and the formation of linear actin filaments. The chain is Formin-G (forG) from Dictyostelium discoideum (Social amoeba).